Here is a 362-residue protein sequence, read N- to C-terminus: Chemerin-like receptor 1 (362 aa).

The Extracellular portion of the chain corresponds to 1–37 (MEAEDYNASYEDYPDDVDPIVVLEELSPLEGRVVRIL). A glycan (N-linked (GlcNAc...) asparagine) is linked at Asn7. Residues 38–58 (LVAVYSVICLLGILGNGLVIV) form a helical membrane-spanning segment. The Cytoplasmic portion of the chain corresponds to 59-70 (MITCKMKRTVNT). The helical transmembrane segment at 71 to 91 (VWFLNLAVADFLFNVFLPVHI) threads the bilayer. Topologically, residues 92 to 108 (AYAALDYHWVFGTAMCK) are extracellular. A disulfide bond links Cys107 and Cys184. Residues 109–129 (ISNFLLIHNMFTSVFLLTVIS) form a helical membrane-spanning segment. Over 130-151 (FDRCVSVLLPVWSQNHRSVRLA) the chain is Cytoplasmic. A helical membrane pass occupies residues 152–172 (YTACLVIWVLAFFLSSPSLVF). Residues 173-219 (RDTARLHGKISCFNNFSLSAAVSSPWPAHPQVDPVGSGRHKVVTITR) are Extracellular-facing. N-linked (GlcNAc...) asparagine glycosylation occurs at Asn187. Residues 220-240 (FLCGFLVPGLITTACYLTIVY) form a helical membrane-spanning segment. Residues 241-255 (KLQRSRLAKTKKPFK) are Cytoplasmic-facing. A helical membrane pass occupies residues 256–276 (IILTIIVTFFLCWCPYHAFYL). Residues 277-281 (LELRR) are Extracellular-facing. The helical transmembrane segment at 282-302 (GSVPPSVFSLGVPLATAIAIA) threads the bilayer. Residues 303–362 (NSCMNPILYVFMGQDFKKFRVALFSRLVNALSEDTGHSSYPSHRSFTKMSSMNERETGML) are Cytoplasmic-facing. The residue at position 334 (Ser334) is a Phosphoserine. Residues 336-362 (DTGHSSYPSHRSFTKMSSMNERETGML) are disordered. A Phosphothreonine modification is found at Thr337. Over residues 339–354 (HSSYPSHRSFTKMSSM) the composition is skewed to polar residues. Residues Ser344, Ser347, and Ser353 each carry the phosphoserine modification.

Belongs to the chemokine-like receptor (CMKLR) family. Widely expressed in several tissues including adipose, muscle, liver and brain.

It is found in the cell membrane. Receptor for the chemoattractant adipokine chemerin/RARRES2 and for the omega-3 fatty acid derived molecule resolvin E1. Interaction with RARRES2 initiates activation of G proteins G(i)/G(o) and beta-arrestin pathways inducing cellular responses via second messenger pathways such as intracellular calcium mobilization, phosphorylation of MAP kinases MAPK1/MAPK3 (ERK1/2), TYRO3, MAPK14/P38MAPK and PI3K leading to multifunctional effects, like, reduction of immune responses, enhancing of adipogenesis and angionesis. Resolvin E1 down-regulates cytokine production in macrophages by reducing the activation of MAPK1/3 (ERK1/2) and NF-kappa-B. Positively regulates adipogenesis and adipocyte metabolism. The protein is Chemerin-like receptor 1 (CMLKR1) of Bos taurus (Bovine).